Consider the following 198-residue polypeptide: Recombination protein RecR (198 aa).

A C4-type zinc finger spans residues 56–71; it reads CKVCGNFSEEDECVIC. Residues 79 to 174 enclose the Toprim domain; that stretch reads GVICVVEEPK…RVSKLASGLP (96 aa).

The protein belongs to the RecR family.

Functionally, may play a role in DNA repair. It seems to be involved in an RecBC-independent recombinational process of DNA repair. It may act with RecF and RecO. The protein is Recombination protein RecR of Tropheryma whipplei (strain TW08/27) (Whipple's bacillus).